The sequence spans 148 residues: Deoxyuridine 5'-triphosphate nucleotidohydrolase (148 aa).

Substrate-binding positions include 67–69 (RSG), Asn-80, 84–86 (LID), and Met-94.

Belongs to the dUTPase family. It depends on Mg(2+) as a cofactor.

It catalyses the reaction dUTP + H2O = dUMP + diphosphate + H(+). Its pathway is pyrimidine metabolism; dUMP biosynthesis; dUMP from dCTP (dUTP route): step 2/2. Functionally, this enzyme is involved in nucleotide metabolism: it produces dUMP, the immediate precursor of thymidine nucleotides and it decreases the intracellular concentration of dUTP so that uracil cannot be incorporated into DNA. The protein is Deoxyuridine 5'-triphosphate nucleotidohydrolase of Burkholderia lata (strain ATCC 17760 / DSM 23089 / LMG 22485 / NCIMB 9086 / R18194 / 383).